Here is a 239-residue protein sequence, read N- to C-terminus: Probable transcriptional regulatory protein LMOf2365_0385 (239 aa).

Belongs to the TACO1 family. YeeN subfamily.

The protein localises to the cytoplasm. The polypeptide is Probable transcriptional regulatory protein LMOf2365_0385 (Listeria monocytogenes serotype 4b (strain F2365)).